The chain runs to 469 residues: Dihydrolipoyl dehydrogenase (469 aa).

FAD is bound by residues 40 to 48 (EKASLGGVC), Lys-57, and Ala-120. An intrachain disulfide couples Cys-48 to Cys-53. Residues 186 to 190 (GGGAI), Glu-209, and 275 to 278 (AVGV) each bind NAD(+). FAD is bound by residues Asp-317 and Ala-325. The active-site Proton acceptor is the His-450.

Belongs to the class-I pyridine nucleotide-disulfide oxidoreductase family. Homodimer. The cofactor is FAD.

It is found in the cytoplasm. It carries out the reaction N(6)-[(R)-dihydrolipoyl]-L-lysyl-[protein] + NAD(+) = N(6)-[(R)-lipoyl]-L-lysyl-[protein] + NADH + H(+). In terms of biological role, lipoamide dehydrogenase is a component of the alpha-ketoacid dehydrogenase complexes. This Chlorobaculum parvum (strain DSM 263 / NCIMB 8327) (Chlorobium vibrioforme subsp. thiosulfatophilum) protein is Dihydrolipoyl dehydrogenase (lpd).